The chain runs to 195 residues: Pyridoxal 5'-phosphate synthase subunit PdxT (195 aa).

49–51 (GES) lines the L-glutamine pocket. C81 acts as the Nucleophile in catalysis. L-glutamine contacts are provided by residues R113 and 141–142 (IR). Residues H177 and E179 each act as charge relay system in the active site.

The protein belongs to the glutaminase PdxT/SNO family. In terms of assembly, in the presence of PdxS, forms a dodecamer of heterodimers. Only shows activity in the heterodimer.

The catalysed reaction is aldehydo-D-ribose 5-phosphate + D-glyceraldehyde 3-phosphate + L-glutamine = pyridoxal 5'-phosphate + L-glutamate + phosphate + 3 H2O + H(+). It carries out the reaction L-glutamine + H2O = L-glutamate + NH4(+). The protein operates within cofactor biosynthesis; pyridoxal 5'-phosphate biosynthesis. Functionally, catalyzes the hydrolysis of glutamine to glutamate and ammonia as part of the biosynthesis of pyridoxal 5'-phosphate. The resulting ammonia molecule is channeled to the active site of PdxS. This Mycolicibacterium vanbaalenii (strain DSM 7251 / JCM 13017 / BCRC 16820 / KCTC 9966 / NRRL B-24157 / PYR-1) (Mycobacterium vanbaalenii) protein is Pyridoxal 5'-phosphate synthase subunit PdxT.